The sequence spans 315 residues: Olfactory receptor 2T5 (315 aa).

Topologically, residues 1-29 (MANITRMANHTGKLDFILMGLFRRSKHPA) are extracellular. Residues asparagine 3 and asparagine 9 are each glycosylated (N-linked (GlcNAc...) asparagine). A helical membrane pass occupies residues 30–53 (LLSVVIFVVFLKALSGNAVLILLI). Topologically, residues 54 to 61 (HCDAHLHS) are cytoplasmic. The helical transmembrane segment at 62–83 (PMYFFISQLSLMDMAYISVTVP) threads the bilayer. Topologically, residues 84 to 104 (KMLLDQVMGVNKVSAPECGMQ) are extracellular. Residues cysteine 101 and cysteine 193 are joined by a disulfide bond. A helical transmembrane segment spans residues 105 to 124 (MFLYLTLAGSEFFLLATMAY). Over 125–143 (DRYVAICHPLRYPVLMNHR) the chain is Cytoplasmic. The helical transmembrane segment at 144–162 (VCLFLASGCWFLGSVDGFM) threads the bilayer. Residues 163–199 (LTPITMSFPFCRSWEIHHFFCEVPAVTILSCSDTSLY) lie on the Extracellular side of the membrane. The chain crosses the membrane as a helical span at residues 200–223 (ETLMYLCCVLMLLIPVTIISSSYL). Residues 224–240 (LILLTVHRMNSAEGRKK) lie on the Cytoplasmic side of the membrane. A helical transmembrane segment spans residues 241 to 263 (AFATCSSHLTVVILFYGAAVYTY). At 264–276 (MLPSSYHTPEKDM) the chain is on the extracellular side. The helical transmembrane segment at 277-296 (MVSVFYTILTPVLNPLIYSL) threads the bilayer. Over 297-315 (RNKDVMGALKKMLTVRFVL) the chain is Cytoplasmic.

It belongs to the G-protein coupled receptor 1 family.

Its subcellular location is the cell membrane. In terms of biological role, odorant receptor. This is Olfactory receptor 2T5 (OR2T5) from Homo sapiens (Human).